An 841-amino-acid chain; its full sequence is Homeobox-leucine zipper protein ATHB-9 (841 aa).

Residues 1 to 18 (MMAHHSMDDRDSPDKGFD) are compositionally biased toward basic and acidic residues. The disordered stretch occupies residues 1 to 21 (MMAHHSMDDRDSPDKGFDSGK). A DNA-binding region (homeobox) is located at residues 18–81 (DSGKYVRYTP…NRRCREKQRK (64 aa)). Positions 85–118 (RLQTVNRKLSAMNKLLMEENDRLQKQVSNLVYEN) form a coiled coil. Disordered regions lie at residues 140 to 162 (VVVS…RDVN) and 602 to 630 (DQKT…TKTD). Low complexity predominate over residues 145-155 (QQRQQQNPTHQ). Residues 160–388 (DVNNPANLLS…IAQETSGEVQ (229 aa)) enclose the START domain. Polar residues predominate over residues 603 to 614 (QKTNPNDHQSAS).

The protein belongs to the HD-ZIP homeobox family. Class III subfamily. Binds DNA as homodimer. Interacts with ESR1 and ESR2. Interacts with ZPR3.

The protein localises to the nucleus. Functionally, probable transcription factor involved in the determination of adaxial-abaxial polarity in ovule primordium. Specifies adaxial leaf fates. Binds to the DNA sequence 5'-GTAAT[GC]ATTAC-3'. In Arabidopsis thaliana (Mouse-ear cress), this protein is Homeobox-leucine zipper protein ATHB-9 (ATHB-9).